We begin with the raw amino-acid sequence, 171 residues long: Nicotinamide-nucleotide adenylyltransferase (171 aa).

This sequence belongs to the archaeal NMN adenylyltransferase family.

Its subcellular location is the cytoplasm. The catalysed reaction is beta-nicotinamide D-ribonucleotide + ATP + H(+) = diphosphate + NAD(+). It functions in the pathway cofactor biosynthesis; NAD(+) biosynthesis; NAD(+) from nicotinamide D-ribonucleotide: step 1/1. This chain is Nicotinamide-nucleotide adenylyltransferase, found in Methanococcus maripaludis (strain C5 / ATCC BAA-1333).